The primary structure comprises 87 residues: Large ribosomal subunit protein bL31B (87 aa).

This sequence belongs to the bacterial ribosomal protein bL31 family. Type B subfamily. As to quaternary structure, part of the 50S ribosomal subunit.

The protein is Large ribosomal subunit protein bL31B of Burkholderia thailandensis (strain ATCC 700388 / DSM 13276 / CCUG 48851 / CIP 106301 / E264).